The following is a 291-amino-acid chain: 4-hydroxy-tetrahydrodipicolinate synthase (291 aa).

Thr45 contributes to the pyruvate binding site. Residue Tyr133 is the Proton donor/acceptor of the active site. Catalysis depends on Lys161, which acts as the Schiff-base intermediate with substrate. Ile203 serves as a coordination point for pyruvate.

It belongs to the DapA family. As to quaternary structure, homotetramer; dimer of dimers.

The protein resides in the cytoplasm. It carries out the reaction L-aspartate 4-semialdehyde + pyruvate = (2S,4S)-4-hydroxy-2,3,4,5-tetrahydrodipicolinate + H2O + H(+). Its pathway is amino-acid biosynthesis; L-lysine biosynthesis via DAP pathway; (S)-tetrahydrodipicolinate from L-aspartate: step 3/4. Functionally, catalyzes the condensation of (S)-aspartate-beta-semialdehyde [(S)-ASA] and pyruvate to 4-hydroxy-tetrahydrodipicolinate (HTPA). In Neisseria meningitidis serogroup C (strain 053442), this protein is 4-hydroxy-tetrahydrodipicolinate synthase.